The sequence spans 159 residues: Ribosomal RNA large subunit methyltransferase H (159 aa).

S-adenosyl-L-methionine contacts are provided by residues L76, G108, and 127–132; that span reads FSKMTF.

Belongs to the RNA methyltransferase RlmH family. In terms of assembly, homodimer.

It is found in the cytoplasm. The enzyme catalyses pseudouridine(1915) in 23S rRNA + S-adenosyl-L-methionine = N(3)-methylpseudouridine(1915) in 23S rRNA + S-adenosyl-L-homocysteine + H(+). Functionally, specifically methylates the pseudouridine at position 1915 (m3Psi1915) in 23S rRNA. This Staphylococcus carnosus (strain TM300) protein is Ribosomal RNA large subunit methyltransferase H.